The sequence spans 504 residues: Probable cytochrome P450 513F1 (504 aa).

The helical transmembrane segment at 1–21 threads the bilayer; sequence MILSLLFLFVITLYFLIPSRI. Heme is bound at residue Cys449.

It belongs to the cytochrome P450 family. Requires heme as cofactor.

It is found in the membrane. This Dictyostelium discoideum (Social amoeba) protein is Probable cytochrome P450 513F1 (cyp513F1).